We begin with the raw amino-acid sequence, 196 residues long: NADH-quinone oxidoreductase subunit B (196 aa).

Residues cysteine 63, cysteine 64, cysteine 129, and cysteine 159 each contribute to the [4Fe-4S] cluster site.

The protein belongs to the complex I 20 kDa subunit family. As to quaternary structure, NDH-1 is composed of 14 different subunits. Subunits NuoB, C, D, E, F, and G constitute the peripheral sector of the complex. The cofactor is [4Fe-4S] cluster.

The protein resides in the cell inner membrane. The catalysed reaction is a quinone + NADH + 5 H(+)(in) = a quinol + NAD(+) + 4 H(+)(out). Its function is as follows. NDH-1 shuttles electrons from NADH, via FMN and iron-sulfur (Fe-S) centers, to quinones in the respiratory chain. The immediate electron acceptor for the enzyme in this species is believed to be a menaquinone. Couples the redox reaction to proton translocation (for every two electrons transferred, four hydrogen ions are translocated across the cytoplasmic membrane), and thus conserves the redox energy in a proton gradient. The sequence is that of NADH-quinone oxidoreductase subunit B from Bacteroides fragilis (strain ATCC 25285 / DSM 2151 / CCUG 4856 / JCM 11019 / LMG 10263 / NCTC 9343 / Onslow / VPI 2553 / EN-2).